Consider the following 264-residue polypeptide: Thymidylate synthase (264 aa).

Arg21 contacts dUMP. His51 lines the (6R)-5,10-methylene-5,6,7,8-tetrahydrofolate pocket. 126-127 (RR) contacts dUMP. Cys146 serves as the catalytic Nucleophile. Residues 166–169 (RSGD), Asn177, and 207–209 (HIY) each bind dUMP. Residue Asp169 participates in (6R)-5,10-methylene-5,6,7,8-tetrahydrofolate binding. Ala263 provides a ligand contact to (6R)-5,10-methylene-5,6,7,8-tetrahydrofolate.

This sequence belongs to the thymidylate synthase family. Bacterial-type ThyA subfamily. As to quaternary structure, homodimer.

The protein localises to the cytoplasm. It carries out the reaction dUMP + (6R)-5,10-methylene-5,6,7,8-tetrahydrofolate = 7,8-dihydrofolate + dTMP. It functions in the pathway pyrimidine metabolism; dTTP biosynthesis. Catalyzes the reductive methylation of 2'-deoxyuridine-5'-monophosphate (dUMP) to 2'-deoxythymidine-5'-monophosphate (dTMP) while utilizing 5,10-methylenetetrahydrofolate (mTHF) as the methyl donor and reductant in the reaction, yielding dihydrofolate (DHF) as a by-product. This enzymatic reaction provides an intracellular de novo source of dTMP, an essential precursor for DNA biosynthesis. This chain is Thymidylate synthase, found in Sinorhizobium medicae (strain WSM419) (Ensifer medicae).